The following is a 276-amino-acid chain: Undecaprenyl-diphosphatase 1 (276 aa).

8 helical membrane-spanning segments follow: residues methionine 1–valine 21, glutamine 44–phenylalanine 64, glycine 87–leucine 107, valine 114–leucine 134, leucine 150–phenylalanine 170, alanine 190–leucine 210, aspartate 222–methionine 242, and leucine 251–phenylalanine 271.

The protein belongs to the UppP family.

It is found in the cell inner membrane. The enzyme catalyses di-trans,octa-cis-undecaprenyl diphosphate + H2O = di-trans,octa-cis-undecaprenyl phosphate + phosphate + H(+). Catalyzes the dephosphorylation of undecaprenyl diphosphate (UPP). Confers resistance to bacitracin. This is Undecaprenyl-diphosphatase 1 from Burkholderia pseudomallei (strain 1106a).